The following is a 693-amino-acid chain: MAKEFLIELGTEELPPTQLRTLAEAFAANFEAELKGAELAHEGVKWFAAPRRLALKVAALADSQSDKVVEKRGPAVSAAFDAEGNPTKAAQGWARGCGITVDQAERMVTDKGEWLLFKQEVKGQPTSQIVVELAAKALANLPIAKPMRWGNKTTQFIRPVKTLTMLMGSDLIEGEILGVASDRTIRGHRFMGEQEFTIDSAEQYPAILEERGKVMADYEARKAIILADAQKAAAAVGGIADLEDDLVEEVTSLVEWPVVLTAKFEEEFLKVPSEALVYTMKGDQKYFPVYSHENGDENKKLLPNFIFVSNIESKEPRYVIEGNEKVVRPRLADAEFFFNTDRKRPLIDRLPELEQAIFQKQLGTIKDKTDRITELAGYIAEQIGADVEKSKRAGLLAKCDLMTSMVFEFTDTQGVMGMHYARHDGEAEEVAVALNEQYMPRFAGDELPSNGVSTAVAMADKLDTIVGIFGIGQAPKGSDPFALRRASLGVLRIIVEYGYNLDLVDLVAKAKSLFGDRLTNDNVEQDVIEFMLGRFRAWYQDEGFSVDIIQAVLARRPTKPADFDQRVKAVSHFRELEAAESLAAANKRVGNILAKFDGELAADIDLALLQEDAEKALAESVEVMTEALEPAFATGNYQEALSKLADLREPVDAFFDNVMVMADDEALKKNRLTLLNNLRNLFLQIADISLLQK.

Belongs to the class-II aminoacyl-tRNA synthetase family. Tetramer of two alpha and two beta subunits.

Its subcellular location is the cytoplasm. It catalyses the reaction tRNA(Gly) + glycine + ATP = glycyl-tRNA(Gly) + AMP + diphosphate. The protein is Glycine--tRNA ligase beta subunit of Vibrio campbellii (strain ATCC BAA-1116).